Here is a 102-residue protein sequence, read N- to C-terminus: Neuropeptide F (102 aa).

A signal peptide spans 1-26 (MCQTMRCILVACVALALLAAGCRVEA). Positions 27-32 (SNSRPP) are excised as a propeptide. Phenylalanine 62 carries the phenylalanine amide modification. A propeptide spanning residues 66–102 (GSLMDILRNHEMDNINLGKNANNGGEFARGFNEEEIF) is cleaved from the precursor.

This sequence belongs to the NPY family. Expressed in midgut, brain lobes and ventral nerve cord of larvae. Predominantly expressed in two pairs of protocerebral neurons in the larval CNS (at protein level). Intense expression is also seen in the fan-shaped body of the central complex and two lateral areas of the lower part of the central brain that appear to harbor the giant commissural interneurons of the giant fiber pathway (at protein level). Upon glucose feeding, two additional dNPFergic neurons are consistently detected on the ventromedial surface of the subesophageal ganglion (SEG) of third instars larvae. Expressed in a subset of sugar-responsive PAIN neurons in the thoracic body but is absent from other peripheral PAIN neurons.

It localises to the secreted. Integral part of the sensory system that mediates food signaling, providing the neural basis for the regulation of food response; coordinates larval foraging and social behavior changes during development. Required in dopaminergic (DA) neurons that innervate the mushroom body for satiety to suppress appetitive memory performance; a key factor in the internal state of hunger in the brain. NPF neurons coordinately modulate diverse sensory and motor neurons important for feeding, flight, and locomotion. NPF/NPFR pathway exerts its suppressive effect on larval aversion to diverse stressful stimuli (chemical stress and noxious heat) through attenuation of TRP channel-induced neuronal excitation. NPF neural signaling system plays a physiological role in acute modulation of alcohol sensitivity in adults, rather than a general response to intoxication by sedative agents. Activation and inhibition of the NPF system reduces and enhances ethanol preference, respectively. Sexual experience, the NPF system activity and ethanol consumption are all linked; sexual deprivation is a major contributor to enhanced ethanol preference. The polypeptide is Neuropeptide F (NPF) (Drosophila melanogaster (Fruit fly)).